Reading from the N-terminus, the 329-residue chain is DNA-directed RNA polymerase subunit alpha (329 aa).

Positions 1-235 (MQGSVTEFLK…EQLDAFVDLR (235 aa)) are alpha N-terminal domain (alpha-NTD). Positions 249–329 (FDPILLRPVD…NWPPASIAED (81 aa)) are alpha C-terminal domain (alpha-CTD).

It belongs to the RNA polymerase alpha chain family. In terms of assembly, homodimer. The RNAP catalytic core consists of 2 alpha, 1 beta, 1 beta' and 1 omega subunit. When a sigma factor is associated with the core the holoenzyme is formed, which can initiate transcription.

It carries out the reaction RNA(n) + a ribonucleoside 5'-triphosphate = RNA(n+1) + diphosphate. In terms of biological role, DNA-dependent RNA polymerase catalyzes the transcription of DNA into RNA using the four ribonucleoside triphosphates as substrates. This Aliivibrio fischeri (strain ATCC 700601 / ES114) (Vibrio fischeri) protein is DNA-directed RNA polymerase subunit alpha.